The primary structure comprises 87 residues: A-agglutinin-binding subunit (87 aa).

Positions 1-18 (MQLLRCFSIFSVIASVLA) are cleaved as a signal peptide. A glycan (O-linked (Man...) threonine) is linked at Thr-22. Residue Ser-30 is glycosylated (O-linked (Man...) serine). O-linked (Man...) threonine glycosylation is present at Thr-32. A glycan (O-linked (Man...) serine) is linked at Ser-39. O-linked (Man...) threonine glycosylation occurs at Thr-63. An O-linked (Man...) serine glycan is attached at Ser-66. The O-linked (Man...) threonine glycan is linked to Thr-75.

In terms of assembly, heterodimer; disulfide-linked. Interacts with SAG1.

Its function is as follows. Receptor binding subunit of the a-agglutinin heterodimer. S.cerevisiae a and alpha cells express the complementary cell surface glycoproteins a-agglutinin and alpha-agglutinin, respectively, which interact with one another to promote cellular aggregation during mating. The polypeptide is A-agglutinin-binding subunit (AGA2) (Saccharomyces cerevisiae (strain ATCC 204508 / S288c) (Baker's yeast)).